A 148-amino-acid polypeptide reads, in one-letter code: Nucleoside diphosphate kinase (148 aa).

The ATP site is built by K9, F57, R85, T91, R102, and N112. H115 acts as the Pros-phosphohistidine intermediate in catalysis.

The protein belongs to the NDK family. In terms of assembly, homotetramer. Mg(2+) serves as cofactor.

It is found in the cytoplasm. The enzyme catalyses a 2'-deoxyribonucleoside 5'-diphosphate + ATP = a 2'-deoxyribonucleoside 5'-triphosphate + ADP. It catalyses the reaction a ribonucleoside 5'-diphosphate + ATP = a ribonucleoside 5'-triphosphate + ADP. In terms of biological role, major role in the synthesis of nucleoside triphosphates other than ATP. The ATP gamma phosphate is transferred to the NDP beta phosphate via a ping-pong mechanism, using a phosphorylated active-site intermediate. This chain is Nucleoside diphosphate kinase, found in Macrococcus caseolyticus (strain JCSC5402) (Macrococcoides caseolyticum).